Consider the following 336-residue polypeptide: Biotin synthase (336 aa).

One can recognise a Radical SAM core domain in the interval 55–288; it reads GEAASLHACS…RTIIKFAAGR (234 aa). Residues Cys-73, Cys-77, and Cys-80 each contribute to the [4Fe-4S] cluster site. 3 residues coordinate [2Fe-2S] cluster: Cys-152, Cys-213, and Lys-283.

This sequence belongs to the radical SAM superfamily. Biotin synthase family. Homodimer. [4Fe-4S] cluster serves as cofactor. The cofactor is [2Fe-2S] cluster.

It catalyses the reaction (4R,5S)-dethiobiotin + (sulfur carrier)-SH + 2 reduced [2Fe-2S]-[ferredoxin] + 2 S-adenosyl-L-methionine = (sulfur carrier)-H + biotin + 2 5'-deoxyadenosine + 2 L-methionine + 2 oxidized [2Fe-2S]-[ferredoxin]. Its pathway is cofactor biosynthesis; biotin biosynthesis; biotin from 7,8-diaminononanoate: step 2/2. In terms of biological role, catalyzes the conversion of dethiobiotin (DTB) to biotin by the insertion of a sulfur atom into dethiobiotin via a radical-based mechanism. The protein is Biotin synthase of Chlorobium limicola (strain DSM 245 / NBRC 103803 / 6330).